Consider the following 130-residue polypeptide: Small ribosomal subunit protein uS11c (130 aa).

Belongs to the universal ribosomal protein uS11 family. As to quaternary structure, part of the 30S ribosomal subunit.

It localises to the plastid. The protein localises to the chloroplast. The chain is Small ribosomal subunit protein uS11c from Stigeoclonium helveticum (Green alga).